Here is a 227-residue protein sequence, read N- to C-terminus: 7-cyano-7-deazaguanine synthase (227 aa).

Residue 10–20 (LSGGLDSCVAT) participates in ATP binding. Zn(2+) is bound by residues C193, C201, C204, and C207.

It belongs to the QueC family. Zn(2+) serves as cofactor.

It catalyses the reaction 7-carboxy-7-deazaguanine + NH4(+) + ATP = 7-cyano-7-deazaguanine + ADP + phosphate + H2O + H(+). It functions in the pathway purine metabolism; 7-cyano-7-deazaguanine biosynthesis. Its function is as follows. Catalyzes the ATP-dependent conversion of 7-carboxy-7-deazaguanine (CDG) to 7-cyano-7-deazaguanine (preQ(0)). This is 7-cyano-7-deazaguanine synthase from Methanobrevibacter smithii (strain ATCC 35061 / DSM 861 / OCM 144 / PS).